Reading from the N-terminus, the 637-residue chain is ATP-dependent zinc metalloprotease FtsH (637 aa).

At 1–6 (MNNQGR) the chain is on the cytoplasmic side. The chain crosses the membrane as a helical span at residues 7–27 (SILAWATLFIFVILLFNVFQS). At 28–103 (DSLLGGRNNI…VVPLETRMNT (76 aa)) the chain is on the periplasmic side. A helical membrane pass occupies residues 104 to 124 (FLGFLISWFPMLLLIGVWVFF). The Cytoplasmic segment spans residues 125–637 (MRQMHGGGKA…TKAKKENYAS (513 aa)). An ATP-binding site is contributed by 195–202 (GPPGTGKT). Position 417 (His-417) interacts with Zn(2+). Residue Glu-418 is part of the active site. The Zn(2+) site is built by His-421 and Asp-495. The tract at residues 603 to 637 (ENKFPFNDSSTIKIDKEKSPEKTKTTKAKKENYAS) is disordered. The span at 615-637 (KIDKEKSPEKTKTTKAKKENYAS) shows a compositional bias: basic and acidic residues.

In the central section; belongs to the AAA ATPase family. The protein in the C-terminal section; belongs to the peptidase M41 family. As to quaternary structure, homohexamer. Zn(2+) is required as a cofactor.

It localises to the cell inner membrane. Acts as a processive, ATP-dependent zinc metallopeptidase for both cytoplasmic and membrane proteins. Plays a role in the quality control of integral membrane proteins. This is ATP-dependent zinc metalloprotease FtsH from Rickettsia conorii (strain ATCC VR-613 / Malish 7).